A 289-amino-acid chain; its full sequence is MKLLVKAPAKINLSLDVLGKRQDGYHEVKMIMTTIDLADRLELTELTEDRIEIVSHNRYVPDDQRNLAYQAAKLLKEKYQVKQGVSIAIEKTIPVAAGLAGGSSDAAATLRGLNKIWNLGLTMDELAELGAEIGSDVSFCVYGGTAIATGRGEKIEHIKTPPSCWVILAKPHIGVSTADVYGNLKLNRVTHPDVDQMAEAINRGDYQGICNAVGNVLEDVTFAMHPEVARIKTRMKRFGADAVLMSGSGPTVFGLVHHDSRMHRIYNGLKGFCEQVYAVRLLGERETLE.

Lys10 is a catalytic residue. An ATP-binding site is contributed by 94-104; sequence PVAAGLAGGSS. Asp136 is an active-site residue.

It belongs to the GHMP kinase family. IspE subfamily.

It carries out the reaction 4-CDP-2-C-methyl-D-erythritol + ATP = 4-CDP-2-C-methyl-D-erythritol 2-phosphate + ADP + H(+). The protein operates within isoprenoid biosynthesis; isopentenyl diphosphate biosynthesis via DXP pathway; isopentenyl diphosphate from 1-deoxy-D-xylulose 5-phosphate: step 3/6. Its function is as follows. Catalyzes the phosphorylation of the position 2 hydroxy group of 4-diphosphocytidyl-2C-methyl-D-erythritol. The sequence is that of 4-diphosphocytidyl-2-C-methyl-D-erythritol kinase from Bacillus cytotoxicus (strain DSM 22905 / CIP 110041 / 391-98 / NVH 391-98).